The chain runs to 292 residues: Histamine N-methyltransferase (292 aa).

A substrate-binding site is contributed by E28. G60, E89, Q94, S120, and I142 together coordinate S-adenosyl-L-methionine. Position 283 (N283) interacts with substrate.

This sequence belongs to the class I-like SAM-binding methyltransferase superfamily. HNMT family. In terms of assembly, monomer.

The protein resides in the cytoplasm. It catalyses the reaction histamine + S-adenosyl-L-methionine = N(tau)-methylhistamine + S-adenosyl-L-homocysteine + H(+). Its function is as follows. Inactivates histamine by N-methylation. Plays an important role in degrading histamine and in regulating the airway response to histamine. In Homo sapiens (Human), this protein is Histamine N-methyltransferase (HNMT).